The chain runs to 272 residues: Tryptophan synthase alpha chain (272 aa).

Catalysis depends on proton acceptor residues Glu-49 and Glu-60.

It belongs to the TrpA family. As to quaternary structure, tetramer of two alpha and two beta chains.

The enzyme catalyses (1S,2R)-1-C-(indol-3-yl)glycerol 3-phosphate + L-serine = D-glyceraldehyde 3-phosphate + L-tryptophan + H2O. It functions in the pathway amino-acid biosynthesis; L-tryptophan biosynthesis; L-tryptophan from chorismate: step 5/5. In terms of biological role, the alpha subunit is responsible for the aldol cleavage of indoleglycerol phosphate to indole and glyceraldehyde 3-phosphate. This Legionella pneumophila subsp. pneumophila (strain Philadelphia 1 / ATCC 33152 / DSM 7513) protein is Tryptophan synthase alpha chain.